The chain runs to 147 residues: D-aminoacyl-tRNA deacylase (147 aa).

The Gly-cisPro motif, important for rejection of L-amino acids motif lies at 136-137; it reads GP.

It belongs to the DTD family. As to quaternary structure, homodimer.

Its subcellular location is the cytoplasm. The enzyme catalyses glycyl-tRNA(Ala) + H2O = tRNA(Ala) + glycine + H(+). It carries out the reaction a D-aminoacyl-tRNA + H2O = a tRNA + a D-alpha-amino acid + H(+). In terms of biological role, an aminoacyl-tRNA editing enzyme that deacylates mischarged D-aminoacyl-tRNAs. Also deacylates mischarged glycyl-tRNA(Ala), protecting cells against glycine mischarging by AlaRS. Acts via tRNA-based rather than protein-based catalysis; rejects L-amino acids rather than detecting D-amino acids in the active site. By recycling D-aminoacyl-tRNA to D-amino acids and free tRNA molecules, this enzyme counteracts the toxicity associated with the formation of D-aminoacyl-tRNA entities in vivo and helps enforce protein L-homochirality. This is D-aminoacyl-tRNA deacylase from Streptococcus pneumoniae serotype 2 (strain D39 / NCTC 7466).